The following is a 665-amino-acid chain: Protein-arginine deiminase type-2 (665 aa).

Positions 123, 125, 127, 131, 154, 156, 158, 166, 169, 171, 177, 180, 354, 389, 408, 411, and 412 each coordinate Ca(2+). Cys647 serves as the catalytic Nucleophile.

Belongs to the protein arginine deiminase family. As to quaternary structure, homodimer. Ca(2+) is required as a cofactor. In terms of tissue distribution, spinal cord, submaxillary gland, cerebrum, cerebellum, and skeletal muscle.

It localises to the cytoplasm. The enzyme catalyses L-arginyl-[protein] + H2O = L-citrullyl-[protein] + NH4(+). In terms of biological role, catalyzes the deimination of arginine residues of proteins. The polypeptide is Protein-arginine deiminase type-2 (Padi2) (Rattus norvegicus (Rat)).